A 415-amino-acid chain; its full sequence is Tyrosine--tRNA ligase (415 aa).

A 'HIGH' region motif is present at residues 54-63 (PTGSNIHLGH). Residues 248-252 (KMSKS) carry the 'KMSKS' region motif. K251 is a binding site for ATP. In terms of domain architecture, S4 RNA-binding spans 351–414 (AKAFYLFSAV…LGKKTFRRLV (64 aa)).

This sequence belongs to the class-I aminoacyl-tRNA synthetase family. TyrS type 2 subfamily. In terms of assembly, homodimer.

Its subcellular location is the cytoplasm. The enzyme catalyses tRNA(Tyr) + L-tyrosine + ATP = L-tyrosyl-tRNA(Tyr) + AMP + diphosphate + H(+). In terms of biological role, catalyzes the attachment of tyrosine to tRNA(Tyr) in a two-step reaction: tyrosine is first activated by ATP to form Tyr-AMP and then transferred to the acceptor end of tRNA(Tyr). The sequence is that of Tyrosine--tRNA ligase from Synechococcus sp. (strain CC9605).